The chain runs to 313 residues: Acetaldehyde dehydrogenase 3 (313 aa).

11 to 14 (SGNI) is an NAD(+) binding site. Cys-129 serves as the catalytic Acyl-thioester intermediate. Residues 160 to 168 (SAGPGTRAN) and Asn-288 each bind NAD(+).

The protein belongs to the acetaldehyde dehydrogenase family.

It catalyses the reaction acetaldehyde + NAD(+) + CoA = acetyl-CoA + NADH + H(+). This Rhizorhabdus wittichii (strain DSM 6014 / CCUG 31198 / JCM 15750 / NBRC 105917 / EY 4224 / RW1) (Sphingomonas wittichii) protein is Acetaldehyde dehydrogenase 3.